The following is a 743-amino-acid chain: Cytosolic endo-beta-N-acetylglucosaminidase (743 aa).

Met1 carries the post-translational modification N-acetylmethionine. The span at 1 to 11 shows a compositional bias: low complexity; that stretch reads MEAAAVTVTRS. Residues 1–55 form a disordered region; it reads MEAAAVTVTRSATRRRRRQLQGLAAPEAGTQEEQEDQEPRPRRRRPGRSIKDEEE. Ser66 bears the Phosphoserine mark. Residues 291 to 383 enclose the BRCT domain; that stretch reads RVFFDSCDGF…DFFQNQDKFW (93 aa).

The protein belongs to the glycosyl hydrolase 85 family. As to expression, widely expressed. Expressed at higher level in thymus and spleen.

The protein localises to the cytoplasm. Its subcellular location is the cytosol. It catalyses the reaction an N(4)-(oligosaccharide-(1-&gt;3)-[oligosaccharide-(1-&gt;6)]-beta-D-Man-(1-&gt;4)-beta-D-GlcNAc-(1-&gt;4)-alpha-D-GlcNAc)-L-asparaginyl-[protein] + H2O = an oligosaccharide-(1-&gt;3)-[oligosaccharide-(1-&gt;6)]-beta-D-Man-(1-&gt;4)-D-GlcNAc + N(4)-(N-acetyl-beta-D-glucosaminyl)-L-asparaginyl-[protein]. Its function is as follows. Endoglycosidase that releases N-glycans from glycoproteins by cleaving the beta-1,4-glycosidic bond in the N,N'-diacetylchitobiose core. Involved in the processing of free oligosaccharides in the cytosol. The chain is Cytosolic endo-beta-N-acetylglucosaminidase (ENGASE) from Homo sapiens (Human).